Consider the following 163-residue polypeptide: Photosystem II extrinsic protein V (163 aa).

Positions 1–26 are cleaved as a signal peptide; sequence MFRRLIGVVVATALLTFQLIVGSATA. Residues Cys63, Cys66, His67, and His118 each coordinate heme c.

The protein belongs to the cytochrome c family. PsbV subfamily. PSII is composed of 1 copy each of membrane proteins PsbA, PsbB, PsbC, PsbD, PsbE, PsbF, PsbH, PsbI, PsbJ, PsbK, PsbL, PsbM, PsbT, PsbX, PsbY, PsbZ, Psb30/Ycf12, peripheral proteins PsbO, CyanoQ (PsbQ), PsbU, PsbV and a large number of cofactors. It forms dimeric complexes. Requires heme c as cofactor.

Its subcellular location is the cellular thylakoid membrane. Functionally, one of the extrinsic, lumenal subunits of photosystem II (PSII). PSII is a light-driven water plastoquinone oxidoreductase, using light energy to abstract electrons from H(2)O, generating a proton gradient subsequently used for ATP formation. The extrinsic proteins stabilize the structure of photosystem II oxygen-evolving complex (OEC), the ion environment of oxygen evolution and protect the OEC against heat-induced inactivation. Low-potential cytochrome c that plays a role in the OEC of PSII. The sequence is that of Photosystem II extrinsic protein V from Nostoc sp. (strain PCC 7120 / SAG 25.82 / UTEX 2576).